We begin with the raw amino-acid sequence, 154 residues long: Basic phospholipase A2 PC20 (154 aa).

Positions 1-21 (MYPAHLLVLLAVCVSLLGASA) are cleaved as a signal peptide. The propeptide occupies 22–27 (ISPRPL). Cystine bridges form between Cys-38-Cys-98, Cys-54-Cys-143, Cys-56-Cys-72, Cys-71-Cys-125, Cys-78-Cys-118, Cys-87-Cys-111, and Cys-105-Cys-116. Residues Tyr-55, Ser-57, and Gly-59 each coordinate Ca(2+). His-75 is a catalytic residue. Asp-76 provides a ligand contact to Ca(2+). Asp-119 is a catalytic residue.

Belongs to the phospholipase A2 family. Group I subfamily. D49 sub-subfamily. The cofactor is Ca(2+). As to expression, expressed by the venom gland.

Its subcellular location is the secreted. The enzyme catalyses a 1,2-diacyl-sn-glycero-3-phosphocholine + H2O = a 1-acyl-sn-glycero-3-phosphocholine + a fatty acid + H(+). Its function is as follows. Snake venom phospholipase A2 (PLA2) that inhibits neuromuscular transmission by blocking acetylcholine release from the nerve termini. PLA2 catalyzes the calcium-dependent hydrolysis of the 2-acyl groups in 3-sn-phosphoglycerides. The chain is Basic phospholipase A2 PC20 from Laticauda colubrina (Yellow-lipped sea krait).